Consider the following 540-residue polypeptide: Phosphoenolpyruvate carboxykinase (ATP) (540 aa).

Position 65 (R65) interacts with substrate. K87 carries the post-translational modification N6-acetyllysine. 2 residues coordinate substrate: Y207 and K213. ATP-binding positions include K213, H232, and 248–256 (GLSGTGKTT). K213 and H232 together coordinate Mn(2+). Residue D269 coordinates Mn(2+). ATP-binding positions include E297, R333, 449-450 (RI), and T455. R333 provides a ligand contact to substrate. N6-acetyllysine is present on K523.

Belongs to the phosphoenolpyruvate carboxykinase (ATP) family. As to quaternary structure, monomer. The cofactor is Mn(2+).

It is found in the cytoplasm. The enzyme catalyses oxaloacetate + ATP = phosphoenolpyruvate + ADP + CO2. It participates in carbohydrate biosynthesis; gluconeogenesis. In terms of biological role, involved in the gluconeogenesis. Catalyzes the conversion of oxaloacetate (OAA) to phosphoenolpyruvate (PEP) through direct phosphoryl transfer between the nucleoside triphosphate and OAA. This is Phosphoenolpyruvate carboxykinase (ATP) from Escherichia coli O6:K15:H31 (strain 536 / UPEC).